Here is a 305-residue protein sequence, read N- to C-terminus: UDP-3-O-acyl-N-acetylglucosamine deacetylase (305 aa).

Residues His78, His237, and Asp241 each contribute to the Zn(2+) site. Residue His264 is the Proton donor of the active site.

Belongs to the LpxC family. Zn(2+) is required as a cofactor.

The catalysed reaction is a UDP-3-O-[(3R)-3-hydroxyacyl]-N-acetyl-alpha-D-glucosamine + H2O = a UDP-3-O-[(3R)-3-hydroxyacyl]-alpha-D-glucosamine + acetate. The protein operates within glycolipid biosynthesis; lipid IV(A) biosynthesis; lipid IV(A) from (3R)-3-hydroxytetradecanoyl-[acyl-carrier-protein] and UDP-N-acetyl-alpha-D-glucosamine: step 2/6. Its function is as follows. Catalyzes the hydrolysis of UDP-3-O-myristoyl-N-acetylglucosamine to form UDP-3-O-myristoylglucosamine and acetate, the committed step in lipid A biosynthesis. This is UDP-3-O-acyl-N-acetylglucosamine deacetylase from Paraburkholderia phymatum (strain DSM 17167 / CIP 108236 / LMG 21445 / STM815) (Burkholderia phymatum).